The primary structure comprises 348 residues: tRNA N6-adenosine threonylcarbamoyltransferase (348 aa).

Residues H116 and H120 each coordinate Fe cation. Substrate is bound by residues 138–142 (QVSGG), D171, G184, D188, and N277. D309 lines the Fe cation pocket.

Belongs to the KAE1 / TsaD family. Fe(2+) is required as a cofactor.

The protein localises to the cytoplasm. The catalysed reaction is L-threonylcarbamoyladenylate + adenosine(37) in tRNA = N(6)-L-threonylcarbamoyladenosine(37) in tRNA + AMP + H(+). Required for the formation of a threonylcarbamoyl group on adenosine at position 37 (t(6)A37) in tRNAs that read codons beginning with adenine. Is involved in the transfer of the threonylcarbamoyl moiety of threonylcarbamoyl-AMP (TC-AMP) to the N6 group of A37, together with TsaE and TsaB. TsaD likely plays a direct catalytic role in this reaction. In Lactobacillus johnsonii (strain CNCM I-12250 / La1 / NCC 533), this protein is tRNA N6-adenosine threonylcarbamoyltransferase.